A 104-amino-acid chain; its full sequence is Probable RNA-binding protein PA4753 (104 aa).

The CRM domain maps to 1–97 (MALTQEQKKQ…NPKPNKNLSN (97 aa)).

The chain is Probable RNA-binding protein PA4753 from Pseudomonas aeruginosa (strain ATCC 15692 / DSM 22644 / CIP 104116 / JCM 14847 / LMG 12228 / 1C / PRS 101 / PAO1).